The following is a 190-amino-acid chain: Abscisic acid receptor PYL2 (190 aa).

An START-like region spans residues 28–182 (FEPDPTTCTS…NLQKLGVAAT (155 aa)). Abscisate is bound by residues lysine 64, 93–98 (ASTSTE), 120–126 (RLKNYKS), and glutamate 147. The Gate loop signature appears at 89–93 (SGLPA). Positions 119–121 (HRL) match the Latch loop motif.

Belongs to the PYR/PYL/RCAR abscisic acid intracellular receptor family. In terms of assembly, homodimer. Binds ABA on one subunit only. Interacts with HAB1, ABI1 and ABI2, and possibly with other PP2Cs. Binds to CARs protein in an ABA-independent manner, both at the plasma membrane and in the nucleus.

Its subcellular location is the cytoplasm. The protein resides in the nucleus. It localises to the cell membrane. Receptor for abscisic acid (ABA) required for ABA-mediated responses such as stomatal closure and germination inhibition. Inhibits the activity of group-A protein phosphatases type 2C (PP2Cs) when activated by ABA. Can be activated by both (-)-ABA and (+)-ABA. In Arabidopsis thaliana (Mouse-ear cress), this protein is Abscisic acid receptor PYL2 (PYL2).